Here is a 318-residue protein sequence, read N- to C-terminus: Formimidoylglutamase (318 aa).

Residues H130, D155, H157, D159, D246, and D248 each contribute to the Mn(2+) site.

It belongs to the arginase family. Mn(2+) serves as cofactor.

It catalyses the reaction N-formimidoyl-L-glutamate + H2O = formamide + L-glutamate. It functions in the pathway amino-acid degradation; L-histidine degradation into L-glutamate; L-glutamate from N-formimidoyl-L-glutamate (hydrolase route): step 1/1. Catalyzes the conversion of N-formimidoyl-L-glutamate to L-glutamate and formamide. The chain is Formimidoylglutamase from Klebsiella pneumoniae (strain 342).